The primary structure comprises 477 residues: Tripartite motif-containing protein 72 (477 aa).

Leucine 14, proline 17, proline 29, cysteine 31, threonine 34, glutamine 37, threonine 53, proline 56, glycine 86, leucine 89, valine 97, glutamate 100, leucine 105, glycine 108, glycine 114, and lysine 117 together coordinate Zn(2+). The segment at 16 to 59 (CPLCLELFRAPVTPECGHTFCQGCLTGAPKNQDQNGSTPCPTCQ) adopts an RING-type zinc-finger fold. The B box-type zinc-finger motif lies at 83–124 (VPKGHCLEHLDPLSVYCEQDKELICGVCASLGKHKGHNIITA). Residues 135-232 (LPQQQVILQE…QMDGVLKDVE (98 aa)) are a coiled coil. One can recognise a B30.2/SPRY domain in the interval 272–476 (DEFKFQVWRK…LKIFYPPAEQ (205 aa)).

Belongs to the TRIM/RBCC family. As to quaternary structure, homodimer. Homooligomer; disulfide-linked. Oligomerizes on the phospholipid membrane. In terms of processing, disulfide bond formation at Cys-244 occurs in case of membrane damage that cause the entry of the oxidized milieu of the extracellular space, resulting in homooligomerization.

The protein localises to the cell membrane. Its subcellular location is the sarcolemma. It is found in the cytoplasmic vesicle membrane. The catalysed reaction is S-ubiquitinyl-[E2 ubiquitin-conjugating enzyme]-L-cysteine + [acceptor protein]-L-lysine = [E2 ubiquitin-conjugating enzyme]-L-cysteine + N(6)-ubiquitinyl-[acceptor protein]-L-lysine.. The protein operates within protein modification; protein ubiquitination. Specifically binds phosphatidylserine. The binding to phospholipids enhances ubiquitination activity. In terms of biological role, muscle-specific E3 ubiquitin-protein ligase that plays a central role in cell membrane repair by nucleating the assembly of the repair machinery at injury sites. Acts as a sensor of oxidation: upon membrane damage, entry of extracellular oxidative environment results in disulfide bond formation and homooligomerization at the injury site. This oligomerization acts as a nucleation site for recruitment of TRIM72-containing vesicles to the injury site, leading to membrane patch formation. Probably acts upstream of the Ca(2+)-dependent membrane resealing process. Required for transport of DYSF to sites of cell injury during repair patch formation. Regulates membrane budding and exocytosis. May be involved in the regulation of the mobility of KCNB1-containing endocytic vesicles. The protein is Tripartite motif-containing protein 72 (trim72) of Xenopus tropicalis (Western clawed frog).